A 1259-amino-acid chain; its full sequence is Protein flightless-1 homolog (1259 aa).

LRR repeat units follow at residues 7–32 (LPFI…VKSM), 33–55 (TSLR…LASL), 56–78 (QKLE…LSSL), 80–103 (NLRA…IFQL), 104–126 (DDLS…LENS), 128–149 (NMLV…LFIN), 150–173 (LTDL…MRRL), 176–201 (LQTL…VSLQ), 222–245 (LSNL…LYSL), 247–268 (NLKR…IDQW), 269–291 (TKLE…ICKL), 293–316 (KLKK…VGKL), 317–339 (SNLV…LCRC), 340–363 (GKLK…HFLT), and 365–385 (LEVL…PVDR). Gelsolin-like repeat units lie at residues 509–589 (IPIQ…SEEF), 628–702 (NIRL…PEFW), 757–830 (DVVP…CQVF), and 1170–1225 (EKCS…RSKD).

As to expression, expressed in ventricular cardiomyocytes, where it particularly localizes to intercalated disks and costamere-like structures (at protein level).

Its subcellular location is the nucleus. It localises to the cytoplasm. It is found in the cytoskeleton. The protein localises to the microtubule organizing center. The protein resides in the centrosome. Its subcellular location is the cell junction. It localises to the focal adhesion. Is a regulator of actin polymerization, required for proper myofibril organization and the assembly of cardiomyocyte cell adhesion complexes. Is a regulator of the length of sarcomeric thin filaments. Regulates cytoskeletal rearrangements involved in cytokinesis and cell migration, by inhibiting Rac1-dependent paxillin phosphorylation. May play a role as coactivator in transcriptional activation by hormone-activated nuclear receptors (NR) and acts in cooperation with NCOA2 and CARM1. Involved in estrogen hormone signaling. The polypeptide is Protein flightless-1 homolog (Danio rerio (Zebrafish)).